A 256-amino-acid polypeptide reads, in one-letter code: Probable aquaporin TIP5-1 (256 aa).

Residue methionine 1 is modified to N-acetylmethionine. 5 helical membrane passes run 24-44 (CYVS…GSVM), 57-77 (PFGV…SVYI), 89-109 (AVTF…MFYW), 144-164 (FGAS…VFTA), and 171-191 (LPLA…VLAA). Residues 87-89 (NPA) carry the NPA 1 motif. The short motif at 200–202 (NPA) is the NPA 2 element. The chain crosses the membrane as a helical span at residues 222–242 (VGPLLGGATAALVYDNVVVPV). Phosphoserine is present on serine 249.

Belongs to the MIP/aquaporin (TC 1.A.8) family. TIP (TC 1.A.8.10) subfamily.

The protein resides in the membrane. Potential aquaporin, which may facilitate the transport of water and small neutral solutes across cell membranes. In Arabidopsis thaliana (Mouse-ear cress), this protein is Probable aquaporin TIP5-1 (TIP5-1).